Consider the following 374-residue polypeptide: 5-methylthioribulose-1-phosphate isomerase (374 aa).

Belongs to the RuBisCO large chain family. Type IV subfamily.

The enzyme catalyses 5-(methylsulfanyl)-D-ribulose 1-phosphate = S-methyl-1-thio-D-xylulose 5-phosphate. It carries out the reaction 5-(methylsulfanyl)-D-ribulose 1-phosphate = 1-(methylsulfanyl)ribulose 5-phosphate. The protein operates within amino-acid biosynthesis; L-methionine biosynthesis via salvage pathway. It participates in metabolic intermediate biosynthesis; 1-deoxy-D-xylulose 5-phosphate biosynthesis. In terms of biological role, catalyzes the conversion of 5-methylthio-D-ribulose 1-phosphate (MTRu-1P) to a 3:1 mixture of 1-methylthioxylulose 5-phosphate (MTXu-5P) and 1-methylthioribulose 5-phosphate (MTRu-5P). Involved in the MTA-isoprenoid shunt of the methionine salvage pathway. This chain is 5-methylthioribulose-1-phosphate isomerase, found in Rhodospirillum rubrum (strain ATCC 11170 / ATH 1.1.1 / DSM 467 / LMG 4362 / NCIMB 8255 / S1).